We begin with the raw amino-acid sequence, 447 residues long: Methylenetetrahydrofolate--tRNA-(uracil-5-)-methyltransferase TrmFO (447 aa).

13 to 18 provides a ligand contact to FAD; sequence GAGLAG.

It belongs to the MnmG family. TrmFO subfamily. FAD serves as cofactor.

Its subcellular location is the cytoplasm. The enzyme catalyses uridine(54) in tRNA + (6R)-5,10-methylene-5,6,7,8-tetrahydrofolate + NADH + H(+) = 5-methyluridine(54) in tRNA + (6S)-5,6,7,8-tetrahydrofolate + NAD(+). It catalyses the reaction uridine(54) in tRNA + (6R)-5,10-methylene-5,6,7,8-tetrahydrofolate + NADPH + H(+) = 5-methyluridine(54) in tRNA + (6S)-5,6,7,8-tetrahydrofolate + NADP(+). Catalyzes the folate-dependent formation of 5-methyl-uridine at position 54 (M-5-U54) in all tRNAs. This Streptococcus thermophilus (strain ATCC BAA-491 / LMD-9) protein is Methylenetetrahydrofolate--tRNA-(uracil-5-)-methyltransferase TrmFO.